A 342-amino-acid polypeptide reads, in one-letter code: UDP-N-acetylglucosamine--N-acetylmuramyl-(pentapeptide) pyrophosphoryl-undecaprenol N-acetylglucosamine transferase (342 aa).

UDP-N-acetyl-alpha-D-glucosamine-binding positions include 10-12, asparagine 124, serine 177, and glutamine 275; that span reads TGG.

It belongs to the glycosyltransferase 28 family. MurG subfamily.

The protein localises to the cell inner membrane. The catalysed reaction is di-trans,octa-cis-undecaprenyl diphospho-N-acetyl-alpha-D-muramoyl-L-alanyl-D-glutamyl-meso-2,6-diaminopimeloyl-D-alanyl-D-alanine + UDP-N-acetyl-alpha-D-glucosamine = di-trans,octa-cis-undecaprenyl diphospho-[N-acetyl-alpha-D-glucosaminyl-(1-&gt;4)]-N-acetyl-alpha-D-muramoyl-L-alanyl-D-glutamyl-meso-2,6-diaminopimeloyl-D-alanyl-D-alanine + UDP + H(+). Its pathway is cell wall biogenesis; peptidoglycan biosynthesis. Functionally, cell wall formation. Catalyzes the transfer of a GlcNAc subunit on undecaprenyl-pyrophosphoryl-MurNAc-pentapeptide (lipid intermediate I) to form undecaprenyl-pyrophosphoryl-MurNAc-(pentapeptide)GlcNAc (lipid intermediate II). This chain is UDP-N-acetylglucosamine--N-acetylmuramyl-(pentapeptide) pyrophosphoryl-undecaprenol N-acetylglucosamine transferase, found in Campylobacter jejuni subsp. jejuni serotype O:2 (strain ATCC 700819 / NCTC 11168).